Here is a 1332-residue protein sequence, read N- to C-terminus: Misshapen-like kinase 1 (1332 aa).

The 265-residue stretch at 25-289 (FELVEVVGNG…TEQLLKFPFI (265 aa)) folds into the Protein kinase domain. ATP contacts are provided by residues 31-39 (VGNGTYGQV) and K54. D153 functions as the Proton acceptor in the catalytic mechanism. 3 disordered regions span residues 300-347 (IQLK…NVPG), 363-383 (KSNS…QRDP), and 395-887 (QRRI…GTMV). Positions 317 to 333 (EETEYEYSGSEEEDDSH) are enriched in acidic residues. A phosphoserine mark is found at S324 and S326. Over residues 371–380 (QQQQLQQQQQ) the composition is skewed to low complexity. The span at 396–466 (RRIEEQKEER…EEQRQSERLQ (71 aa)) shows a compositional bias: basic and acidic residues. A compositionally biased stretch (low complexity) spans 479-497 (LQQQQQQQQLQKQQQQQLL). Residues R501 and R509 each carry the omega-N-methylarginine modification. Positions 518–528 (AWAREVEERTR) are enriched in basic and acidic residues. Over residues 547 to 561 (PEPPIPQASPGPPGP) the composition is skewed to pro residues. Residues 598–608 (RSQSLQDQPTR) are compositionally biased toward polar residues. S641 is subject to Phosphoserine. Residues 670 to 682 (QRTSSIATALNTS) show a composition bias toward polar residues. Residue S701 is modified to Phosphoserine. Over residues 716 to 729 (PKPPGPPAQPPGPP) the composition is skewed to pro residues. A compositionally biased stretch (basic and acidic residues) spans 736–748 (DLRRSDPGWERSD). 5 positions are modified to phosphoserine: S754, S763, S777, S778, and S782. Basic and acidic residues predominate over residues 804-821 (LLKERTLDEAPRPPKKAM). The segment covering 828–841 (EEVESSEDDEEEGE) has biased composition (acidic residues). Positions 866-1332 (MVVHDVEEIT…TLNRNCIMNW (467 aa)) are mediates interaction with RAP2A. The residue at position 891 (T891) is a Phosphothreonine. Residues 902-943 (DSNGYTNLPDVVQPSHSPTENSKGQSPPSKDGSGDYQSRGLV) form a disordered region. Positions 915-929 (PSHSPTENSKGQSPP) are enriched in polar residues. A CNH domain is found at 1019-1306 (NSEILCAALW…KFLCERNDKV (288 aa)).

It belongs to the protein kinase superfamily. STE Ser/Thr protein kinase family. STE20 subfamily. In terms of assembly, interacts with TANC1. Interacts with RAP2A. Isoform 4 interacts with NCK1. Requires Mg(2+) as cofactor. Post-translationally, autophosphorylated. In terms of tissue distribution, expressed in the brain, isoform 2 is more abundant than isoform 1. Isoform 3 is ubiquitously expressed. Isoform 1 is most abundant in the skeletal muscle. Isoform 4 is ubiquitously expressed with relative high levels in brain, skeletal muscle, pancreas and testis.

It localises to the cytoplasm. The protein localises to the postsynaptic density. It is found in the cell projection. The protein resides in the axon. Its subcellular location is the dendrite. It localises to the golgi apparatus. It catalyses the reaction L-seryl-[protein] + ATP = O-phospho-L-seryl-[protein] + ADP + H(+). The catalysed reaction is L-threonyl-[protein] + ATP = O-phospho-L-threonyl-[protein] + ADP + H(+). Functionally, serine/threonine kinase which acts as a negative regulator of Ras-related Rap2-mediated signal transduction to control neuronal structure and AMPA receptor trafficking. Required for normal synaptic density, dendrite complexity, as well as surface AMPA receptor expression in hippocampal neurons. Can activate the JNK and MAPK14/p38 pathways and mediates stimulation of the stress-activated protein kinase MAPK14/p38 MAPK downstream of the Raf/ERK pathway. Phosphorylates TANC1 upon stimulation by RAP2A, MBP and SMAD1. Has an essential function in negative selection of thymocytes, perhaps by coupling NCK1 to activation of JNK1. Activator of the Hippo signaling pathway which plays a pivotal role in organ size control and tumor suppression by restricting proliferation and promoting apoptosis. MAP4Ks act in parallel to and are partially redundant with STK3/MST2 and STK4/MST2 in the phosphorylation and activation of LATS1/2, and establish MAP4Ks as components of the expanded Hippo pathway. Isoform 4 can activate the JNK pathway. Involved in the regulation of actin cytoskeleton reorganization, cell-matrix adhesion, cell-cell adhesion and cell migration. The polypeptide is Misshapen-like kinase 1 (Homo sapiens (Human)).